Consider the following 357-residue polypeptide: DNA replication and repair protein RecF (357 aa).

Position 30-37 (Gly30–Thr37) interacts with ATP.

It belongs to the RecF family.

Its subcellular location is the cytoplasm. In terms of biological role, the RecF protein is involved in DNA metabolism; it is required for DNA replication and normal SOS inducibility. RecF binds preferentially to single-stranded, linear DNA. It also seems to bind ATP. This is DNA replication and repair protein RecF from Shigella boydii serotype 4 (strain Sb227).